We begin with the raw amino-acid sequence, 176 residues long: Ferritin, spleen middle subunit (176 aa).

The Ferritin-like diiron domain maps to 7–156 (QNYHRDCEAA…DFITNLSRMD (150 aa)). Fe cation contacts are provided by E24, E59, H62, E104, and Q138.

The protein belongs to the ferritin family. In spleen, forms a homomer. The functional molecule forms a roughly spherical shell with a diameter of 12 nm and contains a central cavity into which the insoluble mineral iron core is deposited. In terms of tissue distribution, spleen (at protein level).

It carries out the reaction 4 Fe(2+) + O2 + 4 H(+) = 4 Fe(3+) + 2 H2O. In terms of biological role, stores iron in a soluble, non-toxic, readily available form. Important for iron homeostasis. Has ferroxidase activity. Iron is taken up in the ferrous form and deposited as ferric hydroxides after oxidation. The chain is Ferritin, spleen middle subunit from Trematomus bernacchii (Emerald rockcod).